Reading from the N-terminus, the 255-residue chain is Pyrroloquinoline-quinone synthase (255 aa).

The protein belongs to the PqqC family.

The catalysed reaction is 6-(2-amino-2-carboxyethyl)-7,8-dioxo-1,2,3,4,7,8-hexahydroquinoline-2,4-dicarboxylate + 3 O2 = pyrroloquinoline quinone + 2 H2O2 + 2 H2O + H(+). Its pathway is cofactor biosynthesis; pyrroloquinoline quinone biosynthesis. Ring cyclization and eight-electron oxidation of 3a-(2-amino-2-carboxyethyl)-4,5-dioxo-4,5,6,7,8,9-hexahydroquinoline-7,9-dicarboxylic-acid to PQQ. The sequence is that of Pyrroloquinoline-quinone synthase from Granulibacter bethesdensis (strain ATCC BAA-1260 / CGDNIH1).